A 104-amino-acid polypeptide reads, in one-letter code: Large ribosomal subunit protein uL23 (104 aa).

The protein belongs to the universal ribosomal protein uL23 family. In terms of assembly, part of the 50S ribosomal subunit. Contacts protein L29, and trigger factor when it is bound to the ribosome.

Its function is as follows. One of the early assembly proteins it binds 23S rRNA. One of the proteins that surrounds the polypeptide exit tunnel on the outside of the ribosome. Forms the main docking site for trigger factor binding to the ribosome. The sequence is that of Large ribosomal subunit protein uL23 from Leptospira interrogans serogroup Icterohaemorrhagiae serovar copenhageni (strain Fiocruz L1-130).